Reading from the N-terminus, the 541-residue chain is Interleukin-18 receptor 1 (541 aa).

Positions 1–18 (MNCRELPLTLWVLISVST) are cleaved as a signal peptide. 2 disulfide bridges follow: Cys22/Cys41 and Cys43/Cys81. Residues 22–329 (CTSRPHITVV…ADIPGHVFTR (308 aa)) are Extracellular-facing. 3 consecutive Ig-like C2-type domains span residues 33-121 (GEPF…SCFT), 133-212 (KKFF…DRSN), and 220-312 (PKLN…KSFI). 8 N-linked (GlcNAc...) asparagine glycosylation sites follow: Asn91, Asn102, Asn150, Asn197, Asn203, Asn236, Asn255, and Asn297. 2 disulfide bridges follow: Cys119-Cys158 and Cys140-Cys185. An intrachain disulfide couples Cys237 to Cys298. The helical transmembrane segment at 330-350 (GMIIAVLILVAVVCLVTVCVI) threads the bilayer. Residues 351–541 (YRVDLVLFYR…PEVLPVLSES (191 aa)) lie on the Cytoplasmic side of the membrane. Residues 373 to 520 (KTYDAFVSYL…RFWKNLLYLM (148 aa)) form the TIR domain. Residue Glu455 is part of the active site.

The protein belongs to the interleukin-1 receptor family. Forms a ternary complex with IL18 and IL18RAP. Within this complex, IL18R1 is involved in ligand-binding and IL18RAP in signaling leading to NF-kappa-B and JNK activation. Interacts with SLC12A3 in peritoneal macrophages; this interaction is increased by IL18 treatment. N-glycosylated. N-linked glycosyl chains contribute to ligand recognition and intra-receptor interactions required for formation of an active ternary receptor complex. As to expression, highly expressed in leukocytes, spleen, lung. Also expressed, but at lower levels, in liver, small intestine, colon, prostate, thymus, placenta, and heart. Specifically coexpressed with IL18R1 in Th1 cells.

Its subcellular location is the membrane. The enzyme catalyses NAD(+) + H2O = ADP-D-ribose + nicotinamide + H(+). In terms of biological role, within the IL18 receptor complex, responsible for the binding of the pro-inflammatory cytokine IL18, but not IL1A nor IL1B. Involved in IL18-mediated IFNG synthesis from T-helper 1 (Th1) cells. Contributes to IL18-induced cytokine production, either independently of SLC12A3, or as a complex with SLC12A3. The chain is Interleukin-18 receptor 1 from Homo sapiens (Human).